The following is a 249-amino-acid chain: Hydroxyacylglutathione hydrolase (249 aa).

The Zn(2+) site is built by H53, H55, D57, H58, H110, D127, and H165.

This sequence belongs to the metallo-beta-lactamase superfamily. Glyoxalase II family. Monomer. It depends on Zn(2+) as a cofactor.

It catalyses the reaction an S-(2-hydroxyacyl)glutathione + H2O = a 2-hydroxy carboxylate + glutathione + H(+). Its pathway is secondary metabolite metabolism; methylglyoxal degradation; (R)-lactate from methylglyoxal: step 2/2. Functionally, thiolesterase that catalyzes the hydrolysis of S-D-lactoyl-glutathione to form glutathione and D-lactic acid. This Hamiltonella defensa subsp. Acyrthosiphon pisum (strain 5AT) protein is Hydroxyacylglutathione hydrolase.